Here is a 322-residue protein sequence, read N- to C-terminus: Pantothenate kinase (322 aa).

100–107 (GSVAVGKS) is a binding site for ATP.

The protein belongs to the prokaryotic pantothenate kinase family.

Its subcellular location is the cytoplasm. The enzyme catalyses (R)-pantothenate + ATP = (R)-4'-phosphopantothenate + ADP + H(+). Its pathway is cofactor biosynthesis; coenzyme A biosynthesis; CoA from (R)-pantothenate: step 1/5. The sequence is that of Pantothenate kinase from Brucella canis (strain ATCC 23365 / NCTC 10854 / RM-666).